A 425-amino-acid polypeptide reads, in one-letter code: Serine--tRNA ligase (425 aa).

Position 233–235 (233–235) interacts with L-serine; that stretch reads TAE. Position 264–266 (264–266) interacts with ATP; that stretch reads RRE. E287 contacts L-serine. ATP is bound at residue 351-354; it reads EISS. S385 provides a ligand contact to L-serine.

Belongs to the class-II aminoacyl-tRNA synthetase family. Type-1 seryl-tRNA synthetase subfamily. As to quaternary structure, homodimer. The tRNA molecule binds across the dimer.

The protein resides in the cytoplasm. The enzyme catalyses tRNA(Ser) + L-serine + ATP = L-seryl-tRNA(Ser) + AMP + diphosphate + H(+). The catalysed reaction is tRNA(Sec) + L-serine + ATP = L-seryl-tRNA(Sec) + AMP + diphosphate + H(+). The protein operates within aminoacyl-tRNA biosynthesis; selenocysteinyl-tRNA(Sec) biosynthesis; L-seryl-tRNA(Sec) from L-serine and tRNA(Sec): step 1/1. Catalyzes the attachment of serine to tRNA(Ser). Is also able to aminoacylate tRNA(Sec) with serine, to form the misacylated tRNA L-seryl-tRNA(Sec), which will be further converted into selenocysteinyl-tRNA(Sec). This is Serine--tRNA ligase from Prochlorococcus marinus (strain MIT 9215).